Reading from the N-terminus, the 136-residue chain is Phospholipase A2 (136 aa).

Residues Trp8, Gly10, and Gly12 each contribute to the Ca(2+) site. 5 disulfide bridges follow: Cys9/Cys31, Cys30/Cys70, Cys37/Cys63, Cys61/Cys95, and Cys105/Cys115. Asn16 is a glycosylation site (N-linked (GlcNAc...) asparagine). His34 is an active-site residue. Asp35 contributes to the Ca(2+) binding site. Residue Asp64 is part of the active site.

Belongs to the phospholipase A2 family. The cofactor is Ca(2+). As to expression, expressed by the venom gland.

It localises to the secreted. The catalysed reaction is a 1,2-diacyl-sn-glycero-3-phosphocholine + H2O = a 1-acyl-sn-glycero-3-phosphocholine + a fatty acid + H(+). Functionally, PLA2 catalyzes the calcium-dependent hydrolysis of the 2-acyl groups in 3-sn-phosphoglycerides. This chain is Phospholipase A2, found in Bombus pensylvanicus (American bumblebee).